The primary structure comprises 310 residues: Collagen-like protein V6 (310 aa).

The span at 1 to 41 shows a compositional bias: polar residues; sequence MSLSTLFSPNTYNINSKSQTLNNLPSNPTSQTNTLWSNNAY. A disordered region spans residues 1–183; it reads MSLSTLFSPN…GDPGAKGDPG (183 aa). 2 consecutive Collagen-like domains span residues 61 to 119 and 123 to 182; these read GQKG…KGQA and GLKG…KGDP. Residues 92-101 show a composition bias toward basic and acidic residues; sequence SGDKGDKGDS. Asparagine 227 and asparagine 264 each carry an N-linked (GlcNAc...) asparagine; by host glycan.

It belongs to the sputnik virus V6 family.

The sequence is that of Collagen-like protein V6 from Sputnik virophage.